The chain runs to 565 residues: Coiled-coil domain-containing protein 17 (565 aa).

The interval 58-87 (IMAQEKSRDQEASTSALKRLTEETAGSPGE) is disordered. Coiled-coil stretches lie at residues 97–160 (ARRM…TLGA) and 219–271 (LQLQ…KVLS).

The sequence is that of Coiled-coil domain-containing protein 17 (Ccdc17) from Mus musculus (Mouse).